We begin with the raw amino-acid sequence, 1067 residues long: Protein bric-a-brac 2 (1067 aa).

A disordered region spans residues 30 to 121 (MAPPEEPKMV…PPRPLTSSEV (92 aa)). 2 stretches are compositionally biased toward basic and acidic residues: residues 47–62 (HLED…REVE) and 86–98 (KSPE…ELVK). A Phosphotyrosine modification is found at Y55. 3 positions are modified to phosphoserine: S56, S87, and S147. The BTB domain occupies 223 to 288 (VDVTLSCEGH…MYKGEINVCQ (66 aa)). Disordered regions lie at residues 312–412 (GRGE…QSQP), 444–505 (ANQR…AAQH), and 525–563 (GAAG…SHHD). Positions 326–335 (FDDEDEEEEL) are enriched in acidic residues. At S377 the chain carries Phosphoserine. Position 384 is a phosphothreonine (T384). The span at 391 to 412 (GGESEISERGSSGTPGQSQSQP) shows a compositional bias: low complexity. Composition is skewed to gly residues over residues 525–538 (GAAG…GSGS) and 545–556 (GGTGVAGSGAGA). In terms of domain architecture, HTH psq-type spans 635–687 (FRERGPLKSWRPEAMAEAIFSVLKEGLSLSQAARKFDIPYPTFVLYANRVHNM). Positions 645–690 (RPEAMAEAIFSVLKEGLSLSQAARKFDIPYPTFVLYANRVHNMLGP) form a DNA-binding region, H-T-H motif. The a.T hook DNA-binding region spans 697–708 (DPRPKARGRPQR). 3 disordered regions span residues 796 to 829 (QILS…PHAQ), 860 to 879 (AKHQ…PDLS), and 891 to 967 (VMPS…PYSA). Low complexity predominate over residues 812–829 (AHHQQQPSHHQQQSPHAQ). Positions 904–914 (AAPNSAASYAR) are enriched in low complexity. Positions 915 to 933 (ELSRERERDRERERERELS) are enriched in basic and acidic residues. A compositionally biased stretch (low complexity) spans 934 to 949 (RQYGSQSRGSSSGSGS).

As to expression, leg imaginal disk at the central region of the tarsus and in eye antenna disk at the basal cylinder.

Its subcellular location is the nucleus. Functionally, probably acts as a transcriptional regulator. Required for the specification of the tarsal segment. Also involved in antenna development. This is Protein bric-a-brac 2 (bab2) from Drosophila melanogaster (Fruit fly).